A 91-amino-acid polypeptide reads, in one-letter code: Alpha-defensin-related sequence 2 (91 aa).

An N-terminal signal peptide occupies residues methionine 1–alanine 19. Residues aspartate 20 to alanine 58 constitute a propeptide that is removed on maturation. The segment at isoleucine 22–aspartate 48 is disordered. Residues glutamate 27–glutamine 40 show a composition bias toward basic and acidic residues. Tandem repeats lie at residues cysteine 65–glutamine 67, cysteine 68–arginine 70, cysteine 71–serine 73, cysteine 74–serine 76, cysteine 77–arginine 79, cysteine 80–arginine 82, and cysteine 83–arginine 85. The interval cysteine 65 to arginine 85 is 7 X 3 AA tandem repeats of C-P-X.

It belongs to the alpha-defensin family. As to expression, small bowel, spleen, colon, kidney, liver, stomach and femur marrow.

It is found in the secreted. Apparent precursor of a secreted, cationic, proline- and cysteine-rich peptide that contains Cys-Pro-Xaa repeats. Unlike cryptdin, the proposed mature peptide region lacks the structural motif characteristic of defensins. It may have microbicidal activities. The polypeptide is Alpha-defensin-related sequence 2 (Defa-rs2) (Mus musculus (Mouse)).